The primary structure comprises 724 residues: Putative methyltransferase NSUN7 (724 aa).

Cys444 (nucleophile) is an active-site residue. Disordered regions lie at residues Lys542–Asp574, Ile595–Val629, and Thr698–Leu724. Positions Thr543–Lys554 are enriched in basic residues. Residues His562–Ala572 are compositionally biased toward basic and acidic residues. Over residues Ile595–Arg618 the composition is skewed to polar residues.

The protein belongs to the class I-like SAM-binding methyltransferase superfamily. RsmB/NOP family. Expressed in testis.

In terms of biological role, may have S-adenosyl-L-methionine-dependent methyl-transferase activity. This is Putative methyltransferase NSUN7 (Nsun7) from Mus musculus (Mouse).